Consider the following 419-residue polypeptide: MKFTHPLDYYRLNGKQILWYMNIGEDQDSQASNYFPSVKDPQSEKIVVQQEQQLLFLARPQDTVFFHTMPEQAFLDYWKERRLSLPSIICCDKLSQVPDLERYTIIPFIVSDQLLELKRRYPHMDIIAPDLAVCREINHKFNTRRLMERNGFNVTTGYFCSDIESLEHAYEQLISAGFSKCVLKVPYGSSGKGLKVIDNERNFRFLLNYIQNRQTNVDLLLEGWHPHRLSLTSQLFITEYEVHLLAVTEQIIDPNGVYKGTNFTPALSQSEAADYREEILRAGELIRQMGYRGVLGIDSILDTNGELIPVIEINARLTQVTYILPLVIEQKKRYEFVESRVLVFNSRADLDFEDYENDLSEVTRDLPVRIDLYNFCKASGAFKNTYKLFVLVSAHNSEQLIKARSLLDELNTKMTTAVH.

An ATP-grasp domain is found at 144 to 345 (RRLMERNGFN…FVESRVLVFN (202 aa)). Position 174–231 (174–231 (ISAGFSKCVLKVPYGSSGKGLKVIDNERNFRFLLNYIQNRQTNVDLLLEGWHPHRLSL)) interacts with ATP. 3 residues coordinate Mg(2+): D298, E312, and N314. The Mn(2+) site is built by D298, E312, and N314.

In terms of assembly, monomer. The cofactor is Mg(2+). It depends on Mn(2+) as a cofactor.

The enzyme catalyses holo-[BtrI ACP] + L-glutamate + ATP = gamma-L-glutamyl-[BtrI ACP] + ADP + phosphate. It carries out the reaction 4-aminobutanoyl-[BtrI ACP] + L-glutamate + ATP = 4-(gamma-L-glutamylamino)butanoyl-[BtrI ACP] + ADP + phosphate + H(+). It participates in antibiotic biosynthesis; butirosin biosynthesis. Its function is as follows. ATP-dependent ligase that catalyzes 2 steps in the biosynthesis of the side chain of the aminoglycoside antibiotics in the biosynthetic pathway of butirosin. Mediates the addition of one molecule of L-glutamate to a dedicated acyl-carrier protein. Following decarboxylation of the product by BtrK, adds a second L-glutamate molecule. This is [Butirosin acyl-carrier protein]--L-glutamate ligase (btrJ) from Niallia circulans (Bacillus circulans).